Here is a 132-residue protein sequence, read N- to C-terminus: MAAQKQAARKPRRRDRKSVPVGQAHIKSTFNNTIISITDPSGAVVSWASGGDVGFKGSRKSTPYAAGMAAESAARKAMEHGLKKVDVFVKGPGSGRETAIRSLQSAGLEVGSITDVTPQAHNGVRPPKRRRV.

The tract at residues 1-24 is disordered; sequence MAAQKQAARKPRRRDRKSVPVGQA. Residues 7 to 16 are compositionally biased toward basic residues; sequence AARKPRRRDR.

This sequence belongs to the universal ribosomal protein uS11 family. Part of the 30S ribosomal subunit. Interacts with proteins S7 and S18. Binds to IF-3.

Located on the platform of the 30S subunit, it bridges several disparate RNA helices of the 16S rRNA. Forms part of the Shine-Dalgarno cleft in the 70S ribosome. The protein is Small ribosomal subunit protein uS11 of Bifidobacterium adolescentis (strain ATCC 15703 / DSM 20083 / NCTC 11814 / E194a).